The sequence spans 159 residues: Membrane protein FAM174B (159 aa).

The first 27 residues, 1-27 (MRAALPPARLLPLLLLLALLGAPAARA), serve as a signal peptide directing secretion. A disordered region spans residues 28–73 (SRAQSAAPPQPGAERQPRPPPGPGPGNATGTGSGEAAGGGGSSNSS). The Extracellular segment spans residues 28-90 (SRAQSAAPPQ…ISSLLRDLHT (63 aa)). The span at 52–69 (PGNATGTGSGEAAGGGGS) shows a compositional bias: gly residues. N-linked (GlcNAc...) asparagine glycosylation occurs at N54. A helical membrane pass occupies residues 91–111 (LKAAVIVACAFTAFLIACLLL). Over 112–159 (RVFRSGKRLKKTRKYDIITTPAERVEMAPLNEEDDEDEDSTVFDIKYR) the chain is Cytoplasmic.

The protein belongs to the FAM174 family.

Its subcellular location is the cell membrane. It is found in the golgi apparatus. Essential for Golgi structural integrity. The sequence is that of Membrane protein FAM174B (FAM174B) from Bos taurus (Bovine).